A 546-amino-acid chain; its full sequence is U3 small nucleolar RNA-associated protein 18 homolog (546 aa).

Disordered stretches follow at residues 1–55 (MSLS…LEES), 94–118 (SAVR…EENG), and 177–205 (NPGT…DGGV). Over residues 13–23 (IKREELKKQYE) the composition is skewed to basic and acidic residues. Residues 24-35 (DVEDEEEIGSDD) are compositionally biased toward acidic residues. A Phosphoserine modification is found at S33. Over residues 45–55 (TEKEKQKLEES) the composition is skewed to basic and acidic residues. 2 stretches are compositionally biased toward acidic residues: residues 101-117 (DYED…DEEN) and 193-205 (ESSD…DGGV). WD repeat units lie at residues 242–281 (PSNG…NTKI), 372–411 (KMNG…CLYK), 413–454 (VDEG…GGKR), and 509–545 (STMH…HYQN). The short motif at 389 to 404 (LLSSGGDGQVYVWDLR) is the DWD box element.

The protein belongs to the WD repeat UTP18 family.

It localises to the nucleus. The protein localises to the nucleolus. Involved in nucleolar processing of pre-18S ribosomal RNA. In Arabidopsis thaliana (Mouse-ear cress), this protein is U3 small nucleolar RNA-associated protein 18 homolog.